The chain runs to 375 residues: D-aspartate oxidase (375 aa).

Residues 1–17 (MATVCVVGSGILGLAVA) form the signal peptide. Residues Ser9, Leu12, Asp34, Ser51, and Gly55 each coordinate FAD. Asn203 carries N-linked (GlcNAc...) asparagine glycosylation. FAD-binding residues include Arg322, Gly354, and Tyr355.

The protein belongs to the DAMOX/DASOX family. Requires FAD as cofactor.

The enzyme catalyses D-aspartate + O2 + H2O = oxaloacetate + H2O2 + NH4(+). It catalyses the reaction D-glutamate + O2 + H2O = H2O2 + 2-oxoglutarate + NH4(+). Its function is as follows. Selectively catalyzes the oxidative deamination of acidic amino acids. Protects the organism from the toxicity of D-amino acids. Enables the organism to utilize D-amino acids as a source of nutrients. Enables the organism to utilize D-aspartate as a nitrogen source. The chain is D-aspartate oxidase (DDO) from Komagataella phaffii (strain GS115 / ATCC 20864) (Yeast).